A 312-amino-acid chain; its full sequence is MTQPLRIIFAGTPDFSVPPLKTLIDSEHEVVAVYTQPDRPAGRGRKLTASPVKQTALEHDIPVYQPVSLKTPEAQAELEALQADVMIVVAYGLILPKAVLDMPKYGCLNIHASILPRWRGAAPIQRAIQMGDAETGVTIMQMDVGLDTGDMLTILKTPIKPEDTAQTLHDRLSALGCDAMMTTLSNLQTDQLSPVKQDERQVTYAEKLNKAEAELDWQASAQTLARQVQAFNPWPVAFTQYQGQPLRIWQAEVGHASTQKSPGLVISVSKTGMEVATGKGSLLIKQVQPSGKKAMPAYDFAQARQLTGQTLG.

113–116 (SILP) contributes to the (6S)-5,6,7,8-tetrahydrofolate binding site.

The protein belongs to the Fmt family.

The enzyme catalyses L-methionyl-tRNA(fMet) + (6R)-10-formyltetrahydrofolate = N-formyl-L-methionyl-tRNA(fMet) + (6S)-5,6,7,8-tetrahydrofolate + H(+). Functionally, attaches a formyl group to the free amino group of methionyl-tRNA(fMet). The formyl group appears to play a dual role in the initiator identity of N-formylmethionyl-tRNA by promoting its recognition by IF2 and preventing the misappropriation of this tRNA by the elongation apparatus. This Hydrogenovibrio crunogenus (strain DSM 25203 / XCL-2) (Thiomicrospira crunogena) protein is Methionyl-tRNA formyltransferase.